The sequence spans 751 residues: Photosystem I P700 chlorophyll a apoprotein A1 (751 aa).

The next 8 helical transmembrane spans lie at 73-96 (VFSA…FHGA), 159-182 (LYTT…FHYH), 198-222 (LNHH…HVSL), 294-312 (TVHH…GHQY), 349-372 (WHAQ…HHMY), 388-414 (LSLF…IFMV), 436-458 (AMIS…LYIH), and 533-551 (FMVH…LILL). 2 residues coordinate [4Fe-4S] cluster: Cys575 and Cys584. The next 2 membrane-spanning stretches (helical) occupy residues 591-612 (HVFL…HFSW) and 665-687 (LSAY…MFLF). His676 is a chlorophyll a' binding site. Met684 and Tyr692 together coordinate chlorophyll a. A phylloquinone-binding site is contributed by Trp693. Residues 725–745 (AVGVAHYLLGGIATTWSFFLA) form a helical membrane-spanning segment.

It belongs to the PsaA/PsaB family. In terms of assembly, the PsaA/B heterodimer binds the P700 chlorophyll special pair and subsequent electron acceptors. PSI consists of a core antenna complex that captures photons, and an electron transfer chain that converts photonic excitation into a charge separation. The eukaryotic PSI reaction center is composed of at least 11 subunits. It depends on P700 is a chlorophyll a/chlorophyll a' dimer, A0 is one or more chlorophyll a, A1 is one or both phylloquinones and FX is a shared 4Fe-4S iron-sulfur center. as a cofactor.

It localises to the plastid. Its subcellular location is the chloroplast thylakoid membrane. The catalysed reaction is reduced [plastocyanin] + hnu + oxidized [2Fe-2S]-[ferredoxin] = oxidized [plastocyanin] + reduced [2Fe-2S]-[ferredoxin]. PsaA and PsaB bind P700, the primary electron donor of photosystem I (PSI), as well as the electron acceptors A0, A1 and FX. PSI is a plastocyanin/cytochrome c6-ferredoxin oxidoreductase, converting photonic excitation into a charge separation, which transfers an electron from the donor P700 chlorophyll pair to the spectroscopically characterized acceptors A0, A1, FX, FA and FB in turn. Oxidized P700 is reduced on the lumenal side of the thylakoid membrane by plastocyanin or cytochrome c6. This Chlorella vulgaris (Green alga) protein is Photosystem I P700 chlorophyll a apoprotein A1.